Reading from the N-terminus, the 1181-residue chain is Integrin alpha-2 (1181 aa).

Residues 1 to 29 (MGPERTGAAPLPLLLVLALSQGILNCCLA) form the signal peptide. Residues 30 to 1132 (YNVGLPEAKI…KPDEKAEVPT (1103 aa)) lie on the Extracellular side of the membrane. 2 FG-GAP repeats span residues 34-92 (LPEA…TATC) and 101-161 (TSIP…LSAS). Cysteine 83 and cysteine 92 form a disulfide bridge. N-linked (GlcNAc...) asparagine glycans are attached at residues asparagine 105, asparagine 112, and asparagine 343. A VWFA domain is found at 188–365 (WDAVKNFLEK…TLGEQIFSIE (178 aa)). FG-GAP repeat units lie at residues 366–420 (GTVQ…LIFP), 423–475 (AFDQ…ENGN), 477–539 (TVIQ…ILGQ), 540–598 (HQFL…TIRT), and 602–664 (QKIL…FTPE). 3 N-linked (GlcNAc...) asparagine glycosylation sites follow: asparagine 432, asparagine 460, and asparagine 475. Ca(2+)-binding residues include aspartate 499, aspartate 501, aspartate 503, aspartate 507, aspartate 563, asparagine 565, aspartate 567, aspartate 571, aspartate 627, asparagine 629, aspartate 631, and aspartate 635. 5 disulfide bridges follow: cysteine 680-cysteine 737, cysteine 789-cysteine 795, cysteine 865-cysteine 876, cysteine 1019-cysteine 1050, and cysteine 1055-cysteine 1060. Asparagine 699 carries an N-linked (GlcNAc...) asparagine glycan. N-linked (GlcNAc...) asparagine glycosylation is found at asparagine 1057, asparagine 1074, and asparagine 1081. The helical transmembrane segment at 1133–1154 (GVIIGSIIAGILLLLALVAILW) threads the bilayer. The interaction with HPS5 stretch occupies residues 1155–1161 (KLGFFKR). Topologically, residues 1155–1181 (KLGFFKRKYEKMTKNPDEIDETTELSS) are cytoplasmic. Positions 1157–1161 (GFFKR) match the GFFKR motif motif.

It belongs to the integrin alpha chain family. In terms of assembly, heterodimer of an alpha and a beta subunit. Alpha-2 associates with beta-1. Interacts with HPS5 and RAB21. (Microbial infection) Integrin ITGA2:ITGB1 interacts (via ITAG2 I-domain) with rotavirus A VP4 protein. As to quaternary structure, (Microbial infection) Integrin ITGA2:ITGB1 interacts with human echoviruses 1 and 8 capsid proteins.

The protein resides in the membrane. Functionally, integrin alpha-2/beta-1 is a receptor for laminin, collagen, collagen C-propeptides, fibronectin and E-cadherin. It recognizes the proline-hydroxylated sequence G-F-P-G-E-R in collagen. It is responsible for adhesion of platelets and other cells to collagens, modulation of collagen and collagenase gene expression, force generation and organization of newly synthesized extracellular matrix. In terms of biological role, (Microbial infection) Integrin ITGA2:ITGB1 acts as a receptor for Human rotavirus A. (Microbial infection) Integrin ITGA2:ITGB1 acts as a receptor for Human echoviruses 1 and 8. In Homo sapiens (Human), this protein is Integrin alpha-2 (ITGA2).